A 476-amino-acid polypeptide reads, in one-letter code: Membrane-bound lytic murein transglycosylase F (476 aa).

The N-terminal stretch at 1–15 is a signal peptide; sequence MRSFLLILFCVSLLT. The tract at residues 16 to 258 is non-LT domain; the sequence is GCQGERVDAA…HLNEKYFAHV (243 aa). Residues 259 to 476 are LT domain; sequence KRFDYVDTRA…QSEISAAQPN (218 aa). Residue Glu303 is part of the active site. The disordered stretch occupies residues 456-476; that stretch reads EAQQQTAEKQSQSEISAAQPN.

This sequence in the N-terminal section; belongs to the bacterial solute-binding protein 3 family. The protein in the C-terminal section; belongs to the transglycosylase Slt family.

The protein localises to the cell outer membrane. It catalyses the reaction Exolytic cleavage of the (1-&gt;4)-beta-glycosidic linkage between N-acetylmuramic acid (MurNAc) and N-acetylglucosamine (GlcNAc) residues in peptidoglycan, from either the reducing or the non-reducing ends of the peptidoglycan chains, with concomitant formation of a 1,6-anhydrobond in the MurNAc residue.. Its function is as follows. Murein-degrading enzyme that degrades murein glycan strands and insoluble, high-molecular weight murein sacculi, with the concomitant formation of a 1,6-anhydromuramoyl product. Lytic transglycosylases (LTs) play an integral role in the metabolism of the peptidoglycan (PG) sacculus. Their lytic action creates space within the PG sacculus to allow for its expansion as well as for the insertion of various structures such as secretion systems and flagella. The protein is Membrane-bound lytic murein transglycosylase F of Shewanella loihica (strain ATCC BAA-1088 / PV-4).